Reading from the N-terminus, the 551-residue chain is MKTPADTGFAFPDWAYKPESSPGSRQIQLWHFILELLRKEEYQGVIAWQGDYGEFVIKDPDEVARLWGVRKCKPQMNYDKLSRALRYYYNKRILHKTKGKRFTYKFNFNKLVLVNYPFIDMGLAGGAVPQSAPPVPSGGSHFRFPPSTPSEVLSPTEDPRSPPACSSSSSSLFSAVVARRLGRGSVSDCSDGTSELEEPLGEDPRARPPGPPELGAFRGPPLARLPHDPGVFRVYPRPRGGPEPLSPFPVSPLAGPGSLLPPQLSPALPMTPTHLAYTPSPTLSPMYPSGGGGPSGSGGGSHFSFSPEDMKRYLQAHTQSVYNYHLSPRAFLHYPGLVVPQPQRPDKCPLPPMAPETPPVPSSASSSSSSSSSPFKFKLQPPPLGRRQRAAGEKAPGGTDKSSGGSGSGGLAEGAGAVAPPPPPPQIKVEPISEGESEEVEVTDISDEDEEDGEVFKTPRAPPAPPKPEPGEAPGVAQCMPLKLRFKRRWSEDCRLEGGGCLSGGPEDEGEDKKVRGDVGPGESGGPLTPRRVSSDLQHATAQLSLEHRDS.

2 positions are modified to phosphothreonine: threonine 3 and threonine 7. Serine 20 and serine 24 each carry phosphoserine. The ETS DNA-binding region spans 27–107 (IQLWHFILEL…KGKRFTYKFN (81 aa)). Disordered regions lie at residues 130–169 (QSAP…SSSS) and 184–304 (GSVS…SHFS). Residues serine 185 and serine 190 each carry the phosphoserine modification. A compositionally biased stretch (pro residues) spans 239–250 (RGGPEPLSPFPV). Residues 251–268 (SPLAGPGSLLPPQLSPAL) show a composition bias toward low complexity. Positions 289 to 301 (SGGGGPSGSGGGS) are enriched in gly residues. Serine 327 is subject to Phosphoserine. Residues 342–476 (PQRPDKCPLP…KPEPGEAPGV (135 aa)) form a disordered region. Residues 348 to 361 (CPLPPMAPETPPVP) are compositionally biased toward pro residues. Low complexity predominate over residues 362-373 (SSASSSSSSSSS). A compositionally biased stretch (gly residues) spans 404–413 (GGSGSGGLAE). Phosphoserine is present on residues serine 433 and serine 437. A compositionally biased stretch (acidic residues) spans 433-453 (SEGESEEVEVTDISDEDEEDG). Position 443 is a phosphothreonine (threonine 443). Serine 446 is subject to Phosphoserine. Glycyl lysine isopeptide (Lys-Gly) (interchain with G-Cter in SUMO2) cross-links involve residues lysine 467, lysine 483, and lysine 514. Residues 495–551 (RLEGGGCLSGGPEDEGEDKKVRGDVGPGESGGPLTPRRVSSDLQHATAQLSLEHRDS) are disordered. Residue threonine 529 is modified to Phosphothreonine; by MAPK1. Residues serine 534, serine 535, and serine 551 each carry the phosphoserine modification. Polar residues predominate over residues 535-544 (SDLQHATAQL).

Belongs to the ETS family. Post-translationally, phosphorylated by multiple kinases including MAPK1/ERK2 at THR-529. Phosphorylation regulates the activity of ERF. Expressed along the osteogenic margins of the developing calvarial bones, in a similar distribution to that observed for the master osteogenic regulator RUNX2.

It is found in the nucleus. Its function is as follows. Potent transcriptional repressor that binds to the H1 element of the Ets2 promoter. May regulate other genes involved in cellular proliferation. Required for extraembryonic ectoderm differentiation, ectoplacental cone cavity closure, and chorioallantoic attachment. May be important for regulating trophoblast stem cell differentiation. In Mus musculus (Mouse), this protein is ETS domain-containing transcription factor ERF (Erf).